Reading from the N-terminus, the 349-residue chain is Probable formaldehyde dehydrogenase AdhA (349 aa).

The Zn(2+) site is built by Cys-44, His-66, Cys-97, Cys-100, Cys-103, Cys-111, and Cys-161.

The protein belongs to the zinc-containing alcohol dehydrogenase family. Zn(2+) is required as a cofactor.

Functions in the protection against aldehyde-stress. The polypeptide is Probable formaldehyde dehydrogenase AdhA (adhA) (Bacillus subtilis (strain 168)).